Reading from the N-terminus, the 154-residue chain is MRFLGNSEAKTDAKGRVFLPAVFRKQLQAASQECLILRKDTYQDCLVLYPENVWNEQMNELRCKLNRWNSRHQMIFRQFVSDVEVITLDGNGRFLIPKRYLKLAKIQQDVRFIGLDDTIEIWSKEIADKPFITPEDFGKELEEIMGTNNNVEIE.

2 SpoVT-AbrB domains span residues 6 to 53 (NSEA…PENV) and 83 to 126 (VEVI…SKEI).

The protein belongs to the MraZ family. In terms of assembly, forms oligomers.

The protein resides in the cytoplasm. Its subcellular location is the nucleoid. The protein is Transcriptional regulator MraZ of Phocaeicola vulgatus (strain ATCC 8482 / DSM 1447 / JCM 5826 / CCUG 4940 / NBRC 14291 / NCTC 11154) (Bacteroides vulgatus).